The chain runs to 284 residues: ATP phosphoribosyltransferase (284 aa).

Belongs to the ATP phosphoribosyltransferase family. Long subfamily. Equilibrium between an active dimeric form, an inactive hexameric form and higher aggregates. Interconversion between the various forms is largely reversible and is influenced by the natural substrates and inhibitors of the enzyme. The cofactor is Mg(2+).

Its subcellular location is the cytoplasm. The enzyme catalyses 1-(5-phospho-beta-D-ribosyl)-ATP + diphosphate = 5-phospho-alpha-D-ribose 1-diphosphate + ATP. The protein operates within amino-acid biosynthesis; L-histidine biosynthesis; L-histidine from 5-phospho-alpha-D-ribose 1-diphosphate: step 1/9. With respect to regulation, feedback inhibited by histidine. Its function is as follows. Catalyzes the condensation of ATP and 5-phosphoribose 1-diphosphate to form N'-(5'-phosphoribosyl)-ATP (PR-ATP). Has a crucial role in the pathway because the rate of histidine biosynthesis seems to be controlled primarily by regulation of HisG enzymatic activity. This chain is ATP phosphoribosyltransferase, found in Mycobacterium avium (strain 104).